We begin with the raw amino-acid sequence, 144 residues long: Protein SprT-like (144 aa).

In terms of domain architecture, SprT-like spans 4–143 (NKYVQEVSLQ…GKCRGKLTLK (140 aa)). Residue His64 participates in Zn(2+) binding. The active site involves Glu65. His68 lines the Zn(2+) pocket.

The protein belongs to the SprT family. Zn(2+) is required as a cofactor.

The protein localises to the cytoplasm. The chain is Protein SprT-like from Streptococcus suis (strain 98HAH33).